The following is an 82-amino-acid chain: uncharacterized protein (82 aa).

Transmembrane regions (helical) follow at residues 1–21 (MSASKILVGCWLGLAVLSVST), 22–42 (VLLGNAGATLALAAGVLLAAF), and 62–82 (WRLLLLGWPLLMAIGVLLTLL).

The protein resides in the cell membrane. This is an uncharacterized protein from Stutzerimonas stutzeri (Pseudomonas stutzeri).